The chain runs to 354 residues: tRNA N6-adenosine threonylcarbamoyltransferase (354 aa).

A divalent metal cation-binding residues include His-121, His-125, and Tyr-142. Residues 142 to 146 (YVSGG), Asp-174, Gly-189, Glu-193, and Asn-285 each bind substrate. Asp-313 provides a ligand contact to a divalent metal cation.

It belongs to the KAE1 / TsaD family. Component of the EKC/KEOPS complex composed of at least bud32, cgi121, gon7, kae1 and pcc1; the whole complex dimerizes. A divalent metal cation serves as cofactor.

It is found in the cytoplasm. The protein resides in the nucleus. The catalysed reaction is L-threonylcarbamoyladenylate + adenosine(37) in tRNA = N(6)-L-threonylcarbamoyladenosine(37) in tRNA + AMP + H(+). In terms of biological role, component of the EKC/KEOPS complex that is required for the formation of a threonylcarbamoyl group on adenosine at position 37 (t(6)A37) in tRNAs that read codons beginning with adenine. The complex is probably involved in the transfer of the threonylcarbamoyl moiety of threonylcarbamoyl-AMP (TC-AMP) to the N6 group of A37. Kae1 likely plays a direct catalytic role in this reaction, but requires other protein(s) of the complex to fulfill this activity. The EKC/KEOPS complex also promotes both telomere uncapping and telomere elongation. The complex is required for efficient recruitment of transcriptional coactivators. The polypeptide is tRNA N6-adenosine threonylcarbamoyltransferase (gpe-1) (Neurospora crassa (strain ATCC 24698 / 74-OR23-1A / CBS 708.71 / DSM 1257 / FGSC 987)).